The primary structure comprises 51 residues: Small ribosomal subunit protein uS14 (51 aa).

The Zn(2+) site is built by C16, C19, C34, and C37.

It belongs to the universal ribosomal protein uS14 family. Zinc-binding uS14 subfamily. As to quaternary structure, part of the 30S ribosomal subunit. It depends on Zn(2+) as a cofactor.

In terms of biological role, binds 16S rRNA, required for the assembly of 30S particles. In Archaeoglobus fulgidus (strain ATCC 49558 / DSM 4304 / JCM 9628 / NBRC 100126 / VC-16), this protein is Small ribosomal subunit protein uS14.